Here is a 1357-residue protein sequence, read N- to C-terminus: Mediator of RNA polymerase II transcription subunit 13 (1357 aa).

Disordered stretches follow at residues 356-391 (SCNY…GNGF) and 420-487 (DLWN…HRKE). Over residues 435–451 (INPTSQQGDSARITSGS) the composition is skewed to polar residues.

It belongs to the Mediator complex subunit 13 family. As to quaternary structure, component of the SRB8-11 complex, which itself associates with the Mediator complex.

The protein resides in the nucleus. Functionally, component of the SRB8-11 complex. The SRB8-11 complex is a regulatory module of the Mediator complex which is itself involved in regulation of basal and activated RNA polymerase II-dependent transcription. The SRB8-11 complex may be involved in the transcriptional repression of a subset of genes regulated by Mediator. It may inhibit the association of the Mediator complex with RNA polymerase II to form the holoenzyme complex. The sequence is that of Mediator of RNA polymerase II transcription subunit 13 (SSN2) from Eremothecium gossypii (strain ATCC 10895 / CBS 109.51 / FGSC 9923 / NRRL Y-1056) (Yeast).